Reading from the N-terminus, the 587-residue chain is Inorganic phosphate transporter PHO84 (587 aa).

The Extracellular segment spans residues 1 to 67 (MSSVNKDTIH…FGWQQVKTIS (67 aa)). A Glycyl lysine isopeptide (Lys-Gly) (interchain with G-Cter in ubiquitin) cross-link involves residue lysine 6. Residues 68–88 (IAGVGFLTDSYDIFAINLGIT) traverse the membrane as a helical segment. The Cytoplasmic portion of the chain corresponds to 89-108 (MMSYVYWHGSMPGPSQTLLK). The helical transmembrane segment at 109-129 (VSTSVGTVIGQFGFGTLADIV) threads the bilayer. Residues 130–133 (GRKR) are Extracellular-facing. Residues 134–154 (IYGMELIIMIVCTILQTTVAH) form a helical membrane-spanning segment. Over 155–156 (SP) the chain is Cytoplasmic. A helical membrane pass occupies residues 157 to 177 (AINFVAVLTFYRIVMGIGIGG). Over 178–201 (DYPLSSIITSEFATTKWRGAIMGA) the chain is Extracellular. A helical membrane pass occupies residues 202–222 (VFANQAWGQISGGIIALILVA). Over 223 to 250 (AYKGELEYANSGAECDARCQKACDQMWR) the chain is Cytoplasmic. A helical transmembrane segment spans residues 251 to 271 (ILIGLGTVLGLACLYFRLTIP). Residues 272-345 (ESPRYQLDVN…RHFGQWKYGK (74 aa)) are Extracellular-facing. A Glycyl lysine isopeptide (Lys-Gly) (interchain with G-Cter in ubiquitin) cross-link involves residue lysine 298. The residue at position 302 (threonine 302) is a Phosphothreonine. Phosphoserine occurs at positions 303 and 316. Phosphothreonine is present on threonine 317. Serine 321 carries the phosphoserine modification. Residues 346–366 (ILLGTAGSWFTLDVAFYGLSL) form a helical membrane-spanning segment. Residues 367 to 395 (NSAVILQTIGYAGSKNVYKKLYDTAVGNL) are Cytoplasmic-facing. Residues 396–416 (ILICAGSLPGYWVSVFTVDII) traverse the membrane as a helical segment. Residues 417–419 (GRK) lie on the Extracellular side of the membrane. The chain crosses the membrane as a helical span at residues 420–440 (PIQLAGFIILTALFCVIGFAY). At 441 to 442 (HK) the chain is on the cytoplasmic side. Residues 443 to 463 (LGDHGLLALYVICQFFQNFGP) traverse the membrane as a helical segment. At 464–485 (NTTTFIVPGECFPTRYRSTAHG) the chain is on the extracellular side. The helical transmembrane segment at 486–506 (ISAASGKVGAIIAQTALGTLI) threads the bilayer. Topologically, residues 507–522 (DHNCARDGKPTNCWLP) are cytoplasmic. The helical transmembrane segment at 523 to 543 (HVMEIFALFMLLGIFTTLLIP) threads the bilayer. At 544-587 (ETKRKTLEEINELYHDEIDPATLNFRNKNNDIESSSPSQLQHEA) the chain is on the extracellular side. Residues 568 to 587 (FRNKNNDIESSSPSQLQHEA) are disordered. Phosphoserine occurs at positions 577, 579, and 581.

Belongs to the major facilitator superfamily. Phosphate:H(+) symporter (TC 2.A.1.9) family. In terms of assembly, may function as a monomer. In terms of processing, phosphorylated; phosphorylation increases after phosphate addition to the growth medium. Post-translationally, ubiquitinated in a phosphate-dependent manner; ubiquitination may influence the trafficking of PHO84 to the cell membrane and serve as a signal for endocytosis and internalization.

It localises to the cell membrane. The protein localises to the vacuole. The enzyme catalyses phosphate(in) + H(+)(in) = phosphate(out) + H(+)(out). The catalysed reaction is Mn(2+)(in) = Mn(2+)(out). It carries out the reaction Zn(2+)(in) = Zn(2+)(out). It catalyses the reaction Cu(2+)(in) = Cu(2+)(out). The enzyme catalyses Co(2+)(in) = Co(2+)(out). Its activity is regulated as follows. Transport activity is inhibited in the presence of the protonophore carbonylcyanide m-chlorophenylhydrazone. Transport activity is inhibited by glycerol-3-phosphate. Transport activity is inhibited by phosphonoacetic acid. Signaling activity is stimulated by glycerol-3-phosphate which acts as a nontransported PHO84 agonist that can trigger PKA signaling. Signaling activity is stimulated by arsenate. In terms of biological role, proton-coupled high-affinity transporter for external inorganic phosphate. Acts as a transceptor, a membrane protein that in addition to its transporter activity also possesses receptor-like signaling activity; mediates activation of the protein kinase A (PKA) pathway targets during growth induction, triggered by phosphate addition to cells growth-arrested due to previous phosphate starvation. Is not an essential protein, since constitutive, low affinity phosphate transporters exist in yeast. Can function as a low affinity metal transporter that transports manganese, zinc, cobalt and copper. Plays a role in manganese homeostasis predominantly under manganese surplus conditions. The protein is Inorganic phosphate transporter PHO84 (PHO84) of Saccharomyces cerevisiae (strain ATCC 204508 / S288c) (Baker's yeast).